A 381-amino-acid polypeptide reads, in one-letter code: D-rhamnosyltransferase WbpZ (381 aa).

Residues Glu-19, His-116, Lys-206, and Val-252 each coordinate substrate.

Belongs to the glycosyltransferase group 1 family. Glycosyltransferase 4 subfamily.

The protein localises to the cytoplasm. It carries out the reaction GDP-alpha-D-rhamnose + N-acetyl-alpha-D-glucosaminyl-di-trans,octa-cis-undecaprenyl diphosphate = alpha-D-rhamnosyl-(1-&gt;3)-N-acetyl-alpha-D-glucosaminyl-1-diphospho-di-trans,octa-cis-undecaprenol + GDP + H(+). It catalyses the reaction GDP-alpha-D-rhamnose + N-acetyl-alpha-D-galactosaminyl-di-trans,octa-cis-undecaprenyl diphosphate = alpha-D-rhamnosyl-(1-&gt;3)-N-acetyl-alpha-D-galactosaminyl-1-diphospho-di-trans,octa-cis-undecaprenol + GDP + H(+). The enzyme catalyses N-acetyl-alpha-D-glucosaminyl-di-trans,octa-cis-undecaprenyl diphosphate + GDP-alpha-D-mannose = alpha-D-mannosyl-(1-&gt;3)-N-acetyl-alpha-D-glucosaminyl-di-trans,octa-cis-undecaprenyl diphosphate + GDP + H(+). The catalysed reaction is N-acetyl-alpha-D-galactosaminyl-di-trans,octa-cis-undecaprenyl diphosphate + GDP-alpha-D-mannose = alpha-D-mannosyl-(1-&gt;3)-N-acetyl-alpha-D-galctosaminyl-1-diphospho-di-trans,octa-cis-undecaprenol + GDP + H(+). The protein operates within lipopolysaccharide biosynthesis; LPS oligosaccharide biosynthesis. Its activity is regulated as follows. Not activated by dithiothreitol (DTT) using GlcNAc-alpha-PO(3)-PO(3)-phenylundecyl (GlcNAc-PP-PhU) as acceptor substrate. 0.25% Triton X-100 and 0.125% NP-40 increases the activity 2.5-fold and 2-fold, respectively. 0.125% octyl glucoside has little effect on activity. Slightly increased activity with Mg(2+) and Pb(2+), while no effect with Mn(2+), Co(2+), Ni(2+), Cu(2+), Zn(2+), Ca(2+) or EDTA. Not inhibited by N-butyryl-galactosamine-alpha-benzyl or N-butyryl-glucosamine-beta-benzyl. Bis-imidazolium salts having aliphatic spacer groups with 4 or 6 carbons have little effect on activity, but spacer groups of 18-22 aliphatic carbons inhibit activity, with the most potent inhibitor being bis-imidazolium salt having a 20-carbon chain spacer length. Its function is as follows. Non-processive alpha-1,3-D-rhamnosyltransferase. Catalyzes the transfer of one D-rhamnose (D-Rha) residue from donor substrate GDP-D-Rha in alpha-1-3 linkage to both GlcNAc- and GalNAc-diphosphate-lipid acceptor substrates. Is also able to transfer D-mannose (D-Man) to these acceptors at a lower level. Nucleotide sugars GDP-D-Rha, GDP-Fuc, UDP-Gal, UDP-GalNAc, UDP-GlcNAc and CMP-sialic acid cannot act as donor substrates. Only compounds with a diphosphate as the aglycone group can act as acceptor substrates. No activity is detected with compounds containing a diphosphate mimic. Fluorescent undecyl-anthracenyl group-containing compounds, such as GlcNAc-PO(3)-PO(3)-AnthrU and GalNAc-PO(3)-PO(3)-AnthrU, are also good acceptor substrates. Involved in the biosynthesis of the common polysaccharide antigen (CPA), also called A band, which is one of the two major cell surface O-antigens of the P.aeruginosa lipopolysaccharide. Involved in susceptibility to antibiotic colistin. This is D-rhamnosyltransferase WbpZ from Pseudomonas aeruginosa (strain ATCC 15692 / DSM 22644 / CIP 104116 / JCM 14847 / LMG 12228 / 1C / PRS 101 / PAO1).